Here is a 582-residue protein sequence, read N- to C-terminus: Aspartate--tRNA ligase (582 aa).

An L-aspartate-binding site is contributed by Glu174. The aspartate stretch occupies residues 198 to 201 (QITK). Arg220 contributes to the L-aspartate binding site. ATP contacts are provided by residues 220-222 (RDE) and Gln229. His443 serves as a coordination point for L-aspartate. An ATP-binding site is contributed by Glu477. Arg484 lines the L-aspartate pocket. Position 529–532 (529–532 (GLDR)) interacts with ATP.

The protein belongs to the class-II aminoacyl-tRNA synthetase family. Type 1 subfamily. Homodimer.

Its subcellular location is the cytoplasm. The enzyme catalyses tRNA(Asp) + L-aspartate + ATP = L-aspartyl-tRNA(Asp) + AMP + diphosphate. In terms of biological role, catalyzes the attachment of L-aspartate to tRNA(Asp) in a two-step reaction: L-aspartate is first activated by ATP to form Asp-AMP and then transferred to the acceptor end of tRNA(Asp). The chain is Aspartate--tRNA ligase from Streptococcus pyogenes serotype M28 (strain MGAS6180).